Here is a 287-residue protein sequence, read N- to C-terminus: ATP synthase gamma chain (287 aa).

It belongs to the ATPase gamma chain family. In terms of assembly, F-type ATPases have 2 components, CF(1) - the catalytic core - and CF(0) - the membrane proton channel. CF(1) has five subunits: alpha(3), beta(3), gamma(1), delta(1), epsilon(1). CF(0) has three main subunits: a, b and c.

Its subcellular location is the cell inner membrane. Produces ATP from ADP in the presence of a proton gradient across the membrane. The gamma chain is believed to be important in regulating ATPase activity and the flow of protons through the CF(0) complex. The polypeptide is ATP synthase gamma chain (Shigella sonnei (strain Ss046)).